The following is a 98-amino-acid chain: Integration host factor subunit alpha (98 aa).

A disordered region spans residues 52–73 (FDLRQKSERPGRNPKTGEDIPI). A compositionally biased stretch (basic and acidic residues) spans 54–73 (LRQKSERPGRNPKTGEDIPI).

This sequence belongs to the bacterial histone-like protein family. Heterodimer of an alpha and a beta chain.

Its function is as follows. This protein is one of the two subunits of integration host factor, a specific DNA-binding protein that functions in genetic recombination as well as in transcriptional and translational control. This chain is Integration host factor subunit alpha, found in Pseudoalteromonas atlantica (strain T6c / ATCC BAA-1087).